The primary structure comprises 85 residues: Small ribosomal subunit protein uS17 (85 aa).

It belongs to the universal ribosomal protein uS17 family. As to quaternary structure, part of the 30S ribosomal subunit.

In terms of biological role, one of the primary rRNA binding proteins, it binds specifically to the 5'-end of 16S ribosomal RNA. In Natranaerobius thermophilus (strain ATCC BAA-1301 / DSM 18059 / JW/NM-WN-LF), this protein is Small ribosomal subunit protein uS17.